The sequence spans 128 residues: Early 3 14.7 kDa protein (128 aa).

It belongs to the adenoviridae E3_15 family. May bind to host IKBKG, OPTN and RRAGA.

It is found in the host cytoplasm. The protein localises to the host nucleus. In terms of biological role, may prevent Nf-kappaB activation by immune signals like Tumor necrosis factor, presumably by inhibiting NFKB1 dimer DNA-binding. May act directly at the TNF receptor to inhibit signaling. This Human adenovirus C serotype 2 (HAdV-2) protein is Early 3 14.7 kDa protein.